A 303-amino-acid polypeptide reads, in one-letter code: tRNA dimethylallyltransferase (303 aa).

12–19 (GTTASGKS) provides a ligand contact to ATP. 14 to 19 (TASGKS) serves as a coordination point for substrate. The tract at residues 37–40 (DSRQ) is interaction with substrate tRNA.

Belongs to the IPP transferase family. Monomer. Mg(2+) serves as cofactor.

It carries out the reaction adenosine(37) in tRNA + dimethylallyl diphosphate = N(6)-dimethylallyladenosine(37) in tRNA + diphosphate. Its function is as follows. Catalyzes the transfer of a dimethylallyl group onto the adenine at position 37 in tRNAs that read codons beginning with uridine, leading to the formation of N6-(dimethylallyl)adenosine (i(6)A). This Synechocystis sp. (strain ATCC 27184 / PCC 6803 / Kazusa) protein is tRNA dimethylallyltransferase.